The sequence spans 328 residues: Tetraacyldisaccharide 4'-kinase (328 aa).

55–62 (TAGGNGKT) contributes to the ATP binding site.

It belongs to the LpxK family.

The catalysed reaction is a lipid A disaccharide + ATP = a lipid IVA + ADP + H(+). The protein operates within glycolipid biosynthesis; lipid IV(A) biosynthesis; lipid IV(A) from (3R)-3-hydroxytetradecanoyl-[acyl-carrier-protein] and UDP-N-acetyl-alpha-D-glucosamine: step 6/6. In terms of biological role, transfers the gamma-phosphate of ATP to the 4'-position of a tetraacyldisaccharide 1-phosphate intermediate (termed DS-1-P) to form tetraacyldisaccharide 1,4'-bis-phosphate (lipid IVA). This Escherichia coli O17:K52:H18 (strain UMN026 / ExPEC) protein is Tetraacyldisaccharide 4'-kinase.